Consider the following 597-residue polypeptide: Cytosolic Fe-S cluster assembly factor nar1 (597 aa).

The [4Fe-4S] cluster site is built by Cys-20, Cys-62, Cys-65, Cys-68, Cys-216, and Cys-271. The segment at 428-449 (RASRLPGGNRRLPVGRGAASGS) is disordered. 2 residues coordinate [4Fe-4S] cluster: Cys-462 and Cys-466. A disordered region spans residues 479-505 (REASSSVQSSTSAEVPDSSSKPTPHEQ).

This sequence belongs to the NARF family.

In terms of biological role, component of the cytosolic Fe/S protein assembly machinery. Required for maturation of extramitochondrial Fe/S proteins. May play a role in the transfer of pre-assembled Fe/S clusters to target apoproteins. This Aspergillus niger (strain ATCC MYA-4892 / CBS 513.88 / FGSC A1513) protein is Cytosolic Fe-S cluster assembly factor nar1 (nar1).